The chain runs to 413 residues: Eukaryotic initiation factor 4A-10 (413 aa).

The short motif at 40 to 68 is the Q motif element; it reads DSFDAMGLQENLLRGIYAYGFEKPSAIQQ. Residues 71–241 enclose the Helicase ATP-binding domain; it reads IVPFCKGLDV…RKFMNKPVRI (171 aa). An ATP-binding site is contributed by 84–91; sequence AQSGTGKT. The short motif at 189–192 is the DEAD box element; sequence DEAD. One can recognise a Helicase C-terminal domain in the interval 252 to 413; it reads GIKQFYVNVD…ELPANVADLL (162 aa).

It belongs to the DEAD box helicase family. eIF4A subfamily. As to quaternary structure, eIF4F is a multi-subunit complex, the composition of which varies with external and internal environmental conditions. It is composed of at least EIF4A, EIF4E and EIF4G.

It catalyses the reaction ATP + H2O = ADP + phosphate + H(+). In terms of biological role, ATP-dependent RNA helicase which is a subunit of the eIF4F complex involved in cap recognition and is required for mRNA binding to ribosome. In the current model of translation initiation, eIF4A unwinds RNA secondary structures in the 5'-UTR of mRNAs which is necessary to allow efficient binding of the small ribosomal subunit, and subsequent scanning for the initiator codon. In Nicotiana tabacum (Common tobacco), this protein is Eukaryotic initiation factor 4A-10.